A 74-amino-acid polypeptide reads, in one-letter code: uncharacterized protein (74 aa).

This is an uncharacterized protein from Rickettsia conorii (strain ATCC VR-613 / Malish 7).